We begin with the raw amino-acid sequence, 320 residues long: Ferrochelatase (320 aa).

The Fe cation site is built by H194 and E275.

Belongs to the ferrochelatase family. In terms of assembly, monomer.

It localises to the cytoplasm. The enzyme catalyses heme b + 2 H(+) = protoporphyrin IX + Fe(2+). It participates in porphyrin-containing compound metabolism; protoheme biosynthesis; protoheme from protoporphyrin-IX: step 1/1. Its function is as follows. Catalyzes the ferrous insertion into protoporphyrin IX. This chain is Ferrochelatase, found in Shigella boydii serotype 4 (strain Sb227).